A 141-amino-acid polypeptide reads, in one-letter code: Lutropin subunit beta (141 aa).

Residues 1-20 form the signal peptide; the sequence is MERLQGLLLWLLLSPSVVWA. 6 disulfide bridges follow: Cys29–Cys77, Cys43–Cys92, Cys46–Cys130, Cys54–Cys108, Cys58–Cys110, and Cys113–Cys120. N-linked (GlcNAc...) asparagine glycosylation occurs at Asn33.

The protein belongs to the glycoprotein hormones subunit beta family. In terms of assembly, heterodimer of a common alpha chain and a unique beta chain which confers biological specificity to thyrotropin, lutropin, follitropin and gonadotropin.

The protein localises to the secreted. In terms of biological role, promotes spermatogenesis and ovulation by stimulating the testes and ovaries to synthesize steroids. This chain is Lutropin subunit beta (Lhb), found in Rattus norvegicus (Rat).